The chain runs to 345 residues: Ribonucleoside-diphosphate reductase subunit beta (345 aa).

Fe cation is bound by residues aspartate 88, glutamate 118, and histidine 121. The active site involves tyrosine 125. Positions 185, 219, and 222 each coordinate Fe cation.

This sequence belongs to the ribonucleoside diphosphate reductase small chain family. In terms of assembly, tetramer of two alpha and two beta subunits. Fe cation is required as a cofactor.

It catalyses the reaction a 2'-deoxyribonucleoside 5'-diphosphate + [thioredoxin]-disulfide + H2O = a ribonucleoside 5'-diphosphate + [thioredoxin]-dithiol. In terms of biological role, provides the precursors necessary for DNA synthesis. Catalyzes the biosynthesis of deoxyribonucleotides from the corresponding ribonucleotides. In Halalkalibacterium halodurans (strain ATCC BAA-125 / DSM 18197 / FERM 7344 / JCM 9153 / C-125) (Bacillus halodurans), this protein is Ribonucleoside-diphosphate reductase subunit beta (nrdB).